The chain runs to 389 residues: Succinate--CoA ligase [ADP-forming] subunit beta (389 aa).

Residues 9–244 (KQLLAEYGIP…KTQEDETEVT (236 aa)) enclose the ATP-grasp domain. Residues lysine 46, 53–55 (GRG), glycine 102, and glutamate 107 contribute to the ATP site. Positions 199 and 213 each coordinate Mg(2+). Substrate contacts are provided by residues asparagine 264 and 321–323 (GIV).

The protein belongs to the succinate/malate CoA ligase beta subunit family. As to quaternary structure, heterotetramer of two alpha and two beta subunits. Requires Mg(2+) as cofactor.

The catalysed reaction is succinate + ATP + CoA = succinyl-CoA + ADP + phosphate. It catalyses the reaction GTP + succinate + CoA = succinyl-CoA + GDP + phosphate. Its pathway is carbohydrate metabolism; tricarboxylic acid cycle; succinate from succinyl-CoA (ligase route): step 1/1. Succinyl-CoA synthetase functions in the citric acid cycle (TCA), coupling the hydrolysis of succinyl-CoA to the synthesis of either ATP or GTP and thus represents the only step of substrate-level phosphorylation in the TCA. The beta subunit provides nucleotide specificity of the enzyme and binds the substrate succinate, while the binding sites for coenzyme A and phosphate are found in the alpha subunit. The sequence is that of Succinate--CoA ligase [ADP-forming] subunit beta from Xanthomonas axonopodis pv. citri (strain 306).